The following is a 349-amino-acid chain: Phenylalanine--tRNA ligase alpha subunit (349 aa).

Mg(2+) is bound at residue glutamate 259.

Belongs to the class-II aminoacyl-tRNA synthetase family. Phe-tRNA synthetase alpha subunit type 1 subfamily. Tetramer of two alpha and two beta subunits. Requires Mg(2+) as cofactor.

It localises to the cytoplasm. It catalyses the reaction tRNA(Phe) + L-phenylalanine + ATP = L-phenylalanyl-tRNA(Phe) + AMP + diphosphate + H(+). This is Phenylalanine--tRNA ligase alpha subunit from Lactobacillus johnsonii (strain CNCM I-12250 / La1 / NCC 533).